The sequence spans 130 residues: Fluoride-specific ion channel FluC (130 aa).

The next 4 membrane-spanning stretches (helical) occupy residues Phe-10–Phe-30, Gly-41–Met-61, Leu-72–Glu-89, and Leu-105–Leu-125. The Na(+) site is built by Gly-80 and Thr-83.

It belongs to the fluoride channel Fluc/FEX (TC 1.A.43) family.

The protein resides in the cell inner membrane. The catalysed reaction is fluoride(in) = fluoride(out). Na(+) is not transported, but it plays an essential structural role and its presence is essential for fluoride channel function. Functionally, fluoride-specific ion channel. Important for reducing fluoride concentration in the cell, thus reducing its toxicity. This is Fluoride-specific ion channel FluC from Synechococcus sp. (strain JA-2-3B'a(2-13)) (Cyanobacteria bacterium Yellowstone B-Prime).